Consider the following 343-residue polypeptide: Methionine import ATP-binding protein MetN 2 (343 aa).

Positions Ile-2–Val-241 constitute an ABC transporter domain. Gly-38–Ser-45 serves as a coordination point for ATP.

It belongs to the ABC transporter superfamily. Methionine importer (TC 3.A.1.24) family. The complex is composed of two ATP-binding proteins (MetN), two transmembrane proteins (MetI) and a solute-binding protein (MetQ).

Its subcellular location is the cell membrane. The enzyme catalyses L-methionine(out) + ATP + H2O = L-methionine(in) + ADP + phosphate + H(+). It catalyses the reaction D-methionine(out) + ATP + H2O = D-methionine(in) + ADP + phosphate + H(+). In terms of biological role, part of the ABC transporter complex MetNIQ involved in methionine import. Responsible for energy coupling to the transport system. This chain is Methionine import ATP-binding protein MetN 2, found in Lactiplantibacillus plantarum (strain ATCC BAA-793 / NCIMB 8826 / WCFS1) (Lactobacillus plantarum).